Consider the following 365-residue polypeptide: MKLSDFDFDLPSELIAQYPSSERDNSDLLIAVTPLIKTKFYNIIDYLKEGDLLVFNNSKVIKAKLNLGKNITINLNQKLSDDSWSAFAKPARKLHVNDEFYFDNHKVIITEKLAMGEIKVKFELNDISVFEFLNKYGEMPLPVYIRRSHSLCHPVATTTGSKTYLNNDWIPWSNHGMTNTQNDNDRYQTVYSQIEGSVAAPTAGLHFTKDILDKLKAEGIQATFLTLHVGAGTFLPVKTENIHEHKMHTEYCSITPDTAEIINKAKQEGKRIIAVGTTTLRTLESSCNNGIVKAGSFKTDIFITPGFKFQTADMLLTNFHFPKSTLFMLICAFAGFKEMHELYKYAIKEAMRFFSYGDATLLCRK.

It belongs to the QueA family. As to quaternary structure, monomer.

The protein resides in the cytoplasm. It carries out the reaction 7-aminomethyl-7-carbaguanosine(34) in tRNA + S-adenosyl-L-methionine = epoxyqueuosine(34) in tRNA + adenine + L-methionine + 2 H(+). It participates in tRNA modification; tRNA-queuosine biosynthesis. Functionally, transfers and isomerizes the ribose moiety from AdoMet to the 7-aminomethyl group of 7-deazaguanine (preQ1-tRNA) to give epoxyqueuosine (oQ-tRNA). In Rickettsia peacockii (strain Rustic), this protein is S-adenosylmethionine:tRNA ribosyltransferase-isomerase.